A 130-amino-acid polypeptide reads, in one-letter code: Small ribosomal subunit protein uS11 (130 aa).

The protein belongs to the universal ribosomal protein uS11 family. In terms of assembly, part of the 30S ribosomal subunit. Interacts with proteins S7 and S18. Binds to IF-3.

Its function is as follows. Located on the platform of the 30S subunit, it bridges several disparate RNA helices of the 16S rRNA. Forms part of the Shine-Dalgarno cleft in the 70S ribosome. In Rippkaea orientalis (strain PCC 8801 / RF-1) (Cyanothece sp. (strain PCC 8801)), this protein is Small ribosomal subunit protein uS11.